Here is a 164-residue protein sequence, read N- to C-terminus: UPF0114 protein Sbal_0780 (164 aa).

Transmembrane regions (helical) follow at residues 15–35, 53–73, 109–129, and 136–156; these read IMAP…VKFF, LVLL…IVMV, VAAS…MNAE, and IMWY…MGYL.

Belongs to the UPF0114 family.

Its subcellular location is the cell membrane. The protein is UPF0114 protein Sbal_0780 of Shewanella baltica (strain OS155 / ATCC BAA-1091).